The chain runs to 141 residues: Protein X (141 aa).

A disordered region spans residues 22–52 (GPQSSGPPFPRPAAGSAASSASSPSPSDESD). The segment covering 33 to 48 (PAAGSAASSASSPSPS) has biased composition (low complexity). The segment at 68-113 (PCCLVFTCADLRTMDSTVNFVSWHAKRQLGMPSKDLWTPYIKDQLL) is mitochondrial targeting sequence.

Belongs to the orthohepadnavirus protein X family. In terms of assembly, may form homodimer. May interact with host CEBPA, CFLAR, CREB1, DDB1, E4F1, HBXIP, HSPD1/HSP60, NFKBIA, POLR2E and SMAD4. Interacts with host SMC5-SMC6 complex and induces its degradation. Interacts with host TRPC4AP; leading to prevent ubiquitination of TRPC4AP. Interacts with host PLSCR1; this interaction promotes ubiquitination and degradation of HBx and impairs HBx-mediated cell proliferation. Post-translationally, a fraction may be phosphorylated in insect cells and HepG2 cells, a human hepatoblastoma cell line. Phosphorylated in vitro by host protein kinase C or mitogen-activated protein kinase. N-acetylated in insect cells.

Its subcellular location is the host cytoplasm. The protein resides in the host nucleus. It is found in the host mitochondrion. Multifunctional protein that plays a role in silencing host antiviral defenses and promoting viral transcription. Does not seem to be essential for HBV infection. May be directly involved in development of cirrhosis and liver cancer (hepatocellular carcinoma). Most of cytosolic activities involve modulation of cytosolic calcium. The effect on apoptosis is controversial depending on the cell types in which the studies have been conducted. May induce apoptosis by localizing in mitochondria and causing loss of mitochondrial membrane potential. May also modulate apoptosis by binding host CFLAR, a key regulator of the death-inducing signaling complex (DISC). Promotes viral transcription by using the host E3 ubiquitin ligase DDB1 to target the SMC5-SMC6 complex to proteasomal degradation. This host complex would otherwise bind to viral episomal DNA, and prevents its transcription. Moderately stimulates transcription of many different viral and cellular transcription elements. Promoters and enhancers stimulated by HBx contain DNA binding sites for NF-kappa-B, AP-1, AP-2, c-EBP, ATF/CREB, or the calcium-activated factor NF-AT. This Woodchuck hepatitis B virus (isolate w64/pWS23) (WHV) protein is Protein X.